Consider the following 171-residue polypeptide: 3-hydroxydecanoyl-[acyl-carrier-protein] dehydratase (171 aa).

Residue His-71 is part of the active site.

This sequence belongs to the thioester dehydratase family. FabA subfamily. Homodimer.

The protein resides in the cytoplasm. The catalysed reaction is a (3R)-hydroxyacyl-[ACP] = a (2E)-enoyl-[ACP] + H2O. The enzyme catalyses (3R)-hydroxydecanoyl-[ACP] = (2E)-decenoyl-[ACP] + H2O. It catalyses the reaction (2E)-decenoyl-[ACP] = (3Z)-decenoyl-[ACP]. It participates in lipid metabolism; fatty acid biosynthesis. Functionally, necessary for the introduction of cis unsaturation into fatty acids. Catalyzes the dehydration of (3R)-3-hydroxydecanoyl-ACP to E-(2)-decenoyl-ACP and then its isomerization to Z-(3)-decenoyl-ACP. Can catalyze the dehydratase reaction for beta-hydroxyacyl-ACPs with saturated chain lengths up to 16:0, being most active on intermediate chain length. This Rhizobium meliloti (strain 1021) (Ensifer meliloti) protein is 3-hydroxydecanoyl-[acyl-carrier-protein] dehydratase.